A 1790-amino-acid chain; its full sequence is Cytokinesis protein sepA (1790 aa).

Disordered regions lie at residues 1–275 and 328–350; these read MPTS…YLTR and GEQK…GILE. Residues 24-35 are compositionally biased toward basic and acidic residues; the sequence is ERPVEDRWDAHG. 2 stretches are compositionally biased toward low complexity: residues 39 to 62 and 187 to 203; these read SLAP…SIQS and SHHS…SRMS. Polar residues predominate over residues 205-236; it reads DQASIHSSLSSNTRGSSYISTDGSSRTTLPSH. The GBD/FH3 domain occupies 274 to 702; it reads TRPRDDRVVD…YVAMDRRLPD (429 aa). Residues 328-341 show a composition bias toward basic and acidic residues; that stretch reads GEQKRKQKARETHG. Residues 724–811 adopt a coiled-coil conformation; that stretch reads AEARRAYDES…QRNELETREL (88 aa). One can recognise an FH1 domain in the interval 955-1136; that stretch reads DPEQATGLLG…NYLASQGAPS (182 aa). Residues 975–986 are compositionally biased toward basic and acidic residues; it reads ADDAKDEGKPTE. 3 disordered regions span residues 975 to 1119, 1465 to 1484, and 1596 to 1790; these read ADDA…PPGT, NLSD…ITQR, and RAAA…PSTS. Composition is skewed to pro residues over residues 1015 to 1026 and 1033 to 1118; these read APPPPPPPPPAH and APPP…PPPG. Positions 1141–1564 constitute an FH2 domain; the sequence is VMSSIRPKKK…TEASLARKRI (424 aa). Residues 1435–1566 are a coiled coil; the sequence is LQKLNVDQLR…ASLARKRINV (132 aa). A DAD domain is found at 1581–1613; it reads SPATSGAMDSLLEKLRAAAPQAKDQRDRRRRAR. Positions 1608–1620 are enriched in basic residues; the sequence is RRRRARLKERHQV. A compositionally biased stretch (polar residues) spans 1644 to 1661; that stretch reads SGATDTNATDSSLLSPTI. Basic and acidic residues predominate over residues 1694–1710; the sequence is PDPERTRRRRESAEEER. The span at 1720–1746 shows a compositional bias: polar residues; sequence GATSGSKDSNDTTPLSPVTEPTSTQGE.

It belongs to the formin homology family. BNI1 subfamily.

Its function is as follows. Involved in cytokinesis. Overexpression results in growth inhibition. This chain is Cytokinesis protein sepA (sepA), found in Emericella nidulans (strain FGSC A4 / ATCC 38163 / CBS 112.46 / NRRL 194 / M139) (Aspergillus nidulans).